Consider the following 239-residue polypeptide: IkB-like protein (239 aa).

ANK repeat units follow at residues 48–77, 87–116, 124–153, and 158–187; these read NKIT…YPGE, DGNS…KNGI, NGVT…NPNR, and KGFT…KPLF. The Nuclear localization signal signature appears at 81–87; it reads HYRRDKD. The Nuclear localization signal motif lies at 203 to 214; that stretch reads KKKPKIIITGCE. A PxIxITxC motif; Interaction with host PPP3CA motif is present at residues 206-213; that stretch reads PKIIITGC. Positions 228–231 match the FLCV motif motif; that stretch reads FLCV.

The protein belongs to the asfivirus A238L family. In terms of assembly, interacts with host PPIA. Interacts with host PPP3CA/Calcineurin. Interacts with host RELA/p65; interaction of the 32 kDa form with host RELA results in the formation of a stable complex with NF-kappa-B. Interacts with host PPP3R1. Interacts with host EP300; this interaction inhibits the association of host EP300 with host RELA, JUN and NFATC2. Post-translationally, the protein exists in a 28 kDa and a 32 kDa form, probably due to post-translational modifications which are neither phosphorylation, nor sumoylation.

The protein localises to the host nucleus. It is found in the host cytoplasm. IkB-like protein that inhibits the binding of NF-kappa-B to DNA, thereby downregulating pro-inflammatory cytokine production. Forms a heterodimer with the NF-kappa-B subunit RELA/p65 and prevents the activation of the NF-kappa-B transcription factor. Inhibits calcineurin function, which is required for the induction of nuclear factor of activated T cells (NFAT)-dependent immune response genes. Prevents the binding of substrates to calcineurin without affecting the phosphatase activity. Does not contain the serine residues that are phosphorylated by host IkB kinase and thus is not degraded following stimulation of the NFkB pathway. In Ornithodoros (relapsing fever ticks), this protein is IkB-like protein (A238L).